A 334-amino-acid chain; its full sequence is Protein CapI (334 aa).

Position 126 (Ser-126) interacts with substrate. The active-site Proton acceptor is the Tyr-151.

Belongs to the NAD(P)-dependent epimerase/dehydratase family.

It functions in the pathway capsule biogenesis; capsule polysaccharide biosynthesis. Its function is as follows. Required for the biosynthesis of type 1 capsular polysaccharide. This is Protein CapI (capI) from Staphylococcus aureus.